Reading from the N-terminus, the 150-residue chain is Large ribosomal subunit protein uL16 (150 aa).

It belongs to the universal ribosomal protein uL16 family. As to quaternary structure, component of the small ribosomal subunit. Mature ribosomes consist of a small (40S) and a large (60S) subunit. The 40S subunit contains about 33 different proteins and 1 molecule of RNA (18S). The 60S subunit contains about 49 different proteins and 3 molecules of RNA (25S, 5.8S and 5S).

The chain is Large ribosomal subunit protein uL16 (RPL10) from Nicotiana tabacum (Common tobacco).